The chain runs to 361 residues: Nicotinate-nucleotide--dimethylbenzimidazole phosphoribosyltransferase (361 aa).

Glutamate 314 acts as the Proton acceptor in catalysis.

It belongs to the CobT family.

The catalysed reaction is 5,6-dimethylbenzimidazole + nicotinate beta-D-ribonucleotide = alpha-ribazole 5'-phosphate + nicotinate + H(+). The protein operates within nucleoside biosynthesis; alpha-ribazole biosynthesis; alpha-ribazole from 5,6-dimethylbenzimidazole: step 1/2. Catalyzes the synthesis of alpha-ribazole-5'-phosphate from nicotinate mononucleotide (NAMN) and 5,6-dimethylbenzimidazole (DMB). The polypeptide is Nicotinate-nucleotide--dimethylbenzimidazole phosphoribosyltransferase (Mycobacterium bovis (strain BCG / Pasteur 1173P2)).